Consider the following 331-residue polypeptide: Beta-ketoacyl-[acyl-carrier-protein] synthase III (331 aa).

Catalysis depends on residues C115 and H255. Positions Q256–R260 are ACP-binding. Residue N285 is part of the active site.

This sequence belongs to the thiolase-like superfamily. FabH family. As to quaternary structure, homodimer.

Its subcellular location is the cytoplasm. The enzyme catalyses malonyl-[ACP] + acetyl-CoA + H(+) = 3-oxobutanoyl-[ACP] + CO2 + CoA. The protein operates within lipid metabolism; fatty acid biosynthesis. Catalyzes the condensation reaction of fatty acid synthesis by the addition to an acyl acceptor of two carbons from malonyl-ACP. Catalyzes the first condensation reaction which initiates fatty acid synthesis and may therefore play a role in governing the total rate of fatty acid production. Possesses both acetoacetyl-ACP synthase and acetyl transacylase activities. Its substrate specificity determines the biosynthesis of branched-chain and/or straight-chain of fatty acids. This Helicobacter pylori (strain Shi470) protein is Beta-ketoacyl-[acyl-carrier-protein] synthase III.